Here is a 71-residue protein sequence, read N- to C-terminus: Small ribosomal subunit protein bS21 (71 aa).

Residues Lys40–Tyr71 form a disordered region. Residues Arg45–Tyr71 show a composition bias toward basic residues.

The protein belongs to the bacterial ribosomal protein bS21 family.

The sequence is that of Small ribosomal subunit protein bS21 from Xylella fastidiosa (strain M23).